The following is a 362-amino-acid chain: 3-dehydroquinate synthase (362 aa).

NAD(+) is bound by residues 70 to 75 (DGEKYK), 104 to 108 (GVIGD), 128 to 129 (TT), Lys-141, and Lys-150. Residues Glu-183, His-246, and His-263 each coordinate Zn(2+).

The protein belongs to the sugar phosphate cyclases superfamily. Dehydroquinate synthase family. It depends on Co(2+) as a cofactor. Requires Zn(2+) as cofactor. NAD(+) serves as cofactor.

It localises to the cytoplasm. The enzyme catalyses 7-phospho-2-dehydro-3-deoxy-D-arabino-heptonate = 3-dehydroquinate + phosphate. It functions in the pathway metabolic intermediate biosynthesis; chorismate biosynthesis; chorismate from D-erythrose 4-phosphate and phosphoenolpyruvate: step 2/7. Catalyzes the conversion of 3-deoxy-D-arabino-heptulosonate 7-phosphate (DAHP) to dehydroquinate (DHQ). This chain is 3-dehydroquinate synthase, found in Acinetobacter baylyi (strain ATCC 33305 / BD413 / ADP1).